An 850-amino-acid chain; its full sequence is Protein argonaute 8 (850 aa).

Residues 1–30 (MDTTLPPPQHMEREPLKSKSSLLPMTRRGN) are disordered. Residues 247–361 (PVVDFLIANQ…FPIELCELVS (115 aa)) enclose the PAZ domain. The region spanning 518 to 811 (QSILGEVPPK…AAAQMATAMK (294 aa)) is the Piwi domain.

Belongs to the argonaute family. Ago subfamily.

Its function is as follows. Involved in RNA-mediated post-transcriptional gene silencing (PTGS). Main component of the RNA-induced silencing complex (RISC) that binds to a short guide RNA such as a microRNA (miRNA) or small interfering RNA (siRNA). RISC uses the mature miRNA or siRNA as a guide for slicer-directed cleavage of homologous mRNAs to repress gene expression. The polypeptide is Protein argonaute 8 (AGO8) (Arabidopsis thaliana (Mouse-ear cress)).